Consider the following 283-residue polypeptide: Pantothenate synthetase (283 aa).

An ATP-binding site is contributed by 26 to 33; the sequence is MGNLHDGH. The active-site Proton donor is the His-33. Gln-57 serves as a coordination point for (R)-pantoate. Beta-alanine is bound at residue Gln-57. 148–151 contributes to the ATP binding site; that stretch reads GKKD. Residue Gln-154 participates in (R)-pantoate binding. ATP is bound by residues Ala-177 and 185-188; that span reads LSSR.

Belongs to the pantothenate synthetase family. As to quaternary structure, homodimer.

It is found in the cytoplasm. It catalyses the reaction (R)-pantoate + beta-alanine + ATP = (R)-pantothenate + AMP + diphosphate + H(+). Its pathway is cofactor biosynthesis; (R)-pantothenate biosynthesis; (R)-pantothenate from (R)-pantoate and beta-alanine: step 1/1. Functionally, catalyzes the condensation of pantoate with beta-alanine in an ATP-dependent reaction via a pantoyl-adenylate intermediate. This Delftia acidovorans (strain DSM 14801 / SPH-1) protein is Pantothenate synthetase.